A 431-amino-acid polypeptide reads, in one-letter code: Histidinol dehydrogenase (431 aa).

NAD(+) is bound by residues Tyr127, Gln189, and Asn212. Substrate contacts are provided by Ser237, Gln259, and His262. Residues Gln259 and His262 each contribute to the Zn(2+) site. Catalysis depends on proton acceptor residues Glu326 and His327. 4 residues coordinate substrate: His327, Asp360, Glu414, and His419. A Zn(2+)-binding site is contributed by Asp360. Residue His419 participates in Zn(2+) binding.

The protein belongs to the histidinol dehydrogenase family. It depends on Zn(2+) as a cofactor.

The catalysed reaction is L-histidinol + 2 NAD(+) + H2O = L-histidine + 2 NADH + 3 H(+). The protein operates within amino-acid biosynthesis; L-histidine biosynthesis; L-histidine from 5-phospho-alpha-D-ribose 1-diphosphate: step 9/9. Functionally, catalyzes the sequential NAD-dependent oxidations of L-histidinol to L-histidinaldehyde and then to L-histidine. This is Histidinol dehydrogenase from Xanthomonas campestris pv. campestris (strain 8004).